Consider the following 95-residue polypeptide: Aspartyl/glutamyl-tRNA(Asn/Gln) amidotransferase subunit C (95 aa).

This sequence belongs to the GatC family. In terms of assembly, heterotrimer of A, B and C subunits.

The catalysed reaction is L-glutamyl-tRNA(Gln) + L-glutamine + ATP + H2O = L-glutaminyl-tRNA(Gln) + L-glutamate + ADP + phosphate + H(+). It catalyses the reaction L-aspartyl-tRNA(Asn) + L-glutamine + ATP + H2O = L-asparaginyl-tRNA(Asn) + L-glutamate + ADP + phosphate + 2 H(+). Allows the formation of correctly charged Asn-tRNA(Asn) or Gln-tRNA(Gln) through the transamidation of misacylated Asp-tRNA(Asn) or Glu-tRNA(Gln) in organisms which lack either or both of asparaginyl-tRNA or glutaminyl-tRNA synthetases. The reaction takes place in the presence of glutamine and ATP through an activated phospho-Asp-tRNA(Asn) or phospho-Glu-tRNA(Gln). The sequence is that of Aspartyl/glutamyl-tRNA(Asn/Gln) amidotransferase subunit C from Halothermothrix orenii (strain H 168 / OCM 544 / DSM 9562).